A 531-amino-acid chain; its full sequence is Ultra-long-chain fatty acid omega-hydroxylase (531 aa).

Residues 1-22 (MLPITDRLLHLLGLEKTAFRIY) are Lumenal-facing. The chain crosses the membrane as a helical span at residues 23–43 (AVSTLLLFLLFFLFRLLLRFL). Topologically, residues 44-531 (RLCRSFYITC…LKVEPLPPRA (488 aa)) are cytoplasmic. Heme is bound by residues E335 and C475.

It belongs to the cytochrome P450 family. It depends on heme as a cofactor.

It localises to the endoplasmic reticulum membrane. It is found in the microsome membrane. The enzyme catalyses triacontanoate + reduced [NADPH--hemoprotein reductase] + O2 = omega-hydroxy-triacontanoate + oxidized [NADPH--hemoprotein reductase] + H2O + H(+). It catalyses the reaction an omega-methyl-ultra-long-chain fatty acid + reduced [NADPH--hemoprotein reductase] + O2 = an omega-hydroxy-ultra-long-chain fatty acid + oxidized [NADPH--hemoprotein reductase] + H2O + H(+). In terms of biological role, a cytochrome P450 monooxygenase involved in epidermal ceramide biosynthesis. Hydroxylates the terminal carbon (omega-hydroxylation) of ultra-long-chain fatty acyls (C28-C36) prior to ceramide synthesis. Contributes to the synthesis of three classes of omega-hydroxy-ultra-long chain fatty acylceramides having sphingosine, 6-hydroxysphingosine and phytosphingosine bases, all major lipid components that underlie the permeability barrier of the stratum corneum. Mechanistically, uses molecular oxygen inserting one oxygen atom into a substrate, and reducing the second into a water molecule, with two electrons provided by NADPH via cytochrome P450 reductase (CPR; NADPH-ferrihemoprotein reductase). The protein is Ultra-long-chain fatty acid omega-hydroxylase of Homo sapiens (Human).